Reading from the N-terminus, the 579-residue chain is uncharacterized protein (579 aa).

Helical transmembrane passes span 20–40 (ALWA…VVAI), 54–74 (ATVV…MLVA), 86–106 (LYLI…LSSG), 142–162 (GVAL…GPLA), 174–194 (WIFF…AYLI), 204–224 (FDWF…FGLQ), 234–254 (WIWA…YWQA), 279–299 (IAII…YAQA), 310–330 (VLFA…GMII), 335–355 (PLCV…WLLC), 366–386 (LVLP…PLTV), and 467–487 (MLLP…LVDF). Residues 516–579 (REPEEDCDTQ…DTESTAPSAL (64 aa)) are disordered. The segment covering 526–540 (PLRASRPAAAAASRS) has biased composition (low complexity). Positions 570 to 579 (DTESTAPSAL) are enriched in polar residues.

It belongs to the major facilitator superfamily. EmrB family.

The protein localises to the cell membrane. This is an uncharacterized protein from Mycobacterium tuberculosis (strain ATCC 25618 / H37Rv).